A 256-amino-acid polypeptide reads, in one-letter code: Undecaprenyl-diphosphatase (256 aa).

The next 8 membrane-spanning stretches (helical) occupy residues 5 to 25, 41 to 61, 74 to 94, 100 to 120, 135 to 155, 180 to 200, 208 to 228, and 234 to 254; these read IIEI…PISS, NSLM…VFYF, LLSL…VISS, LLEN…IILY, LNFK…IPGV, FLLA…NAIG, LVLI…KFFL, and FSLN…FIII.

It belongs to the UppP family.

Its subcellular location is the cell inner membrane. The catalysed reaction is di-trans,octa-cis-undecaprenyl diphosphate + H2O = di-trans,octa-cis-undecaprenyl phosphate + phosphate + H(+). Catalyzes the dephosphorylation of undecaprenyl diphosphate (UPP). Confers resistance to bacitracin. This Pelagibacter ubique (strain HTCC1062) protein is Undecaprenyl-diphosphatase.